Reading from the N-terminus, the 31-residue chain is Morintide mO3 (31 aa).

Residues 1 to 30 (NRLCCSQYGFCGTTSEYCSRANGCQSNCWG) enclose the Chitin-binding type-1 domain. 2 disulfides stabilise this stretch: C4–C18 and C24–C28.

As to expression, seeds (at protein level).

Functionally, chitin-binding protein which functions in defense against chitin-containing fungal pathogens. In Moringa oleifera (Horseradish tree), this protein is Morintide mO3.